We begin with the raw amino-acid sequence, 63 residues long: Small ribosomal subunit protein eS17 (63 aa).

This sequence belongs to the eukaryotic ribosomal protein eS17 family.

This is Small ribosomal subunit protein eS17 from Methanococcus maripaludis (strain C6 / ATCC BAA-1332).